We begin with the raw amino-acid sequence, 139 residues long: Trafficking protein particle complex subunit 2-like protein (139 aa).

The protein belongs to the TRAPP small subunits family. Sedlin subfamily. Component of the multisubunit TRAPP (transport protein particle) complex, which includes at least TRAPPC2, TRAPPC2L, TRAPPC3, TRAPPC3L, TRAPPC4, TRAPPC5, TRAPPC8, TRAPPC9, TRAPPC10, TRAPPC11 and TRAPPC12. Interacts with the heterodimer TRAPPC3-TRAPPC6A.

Its subcellular location is the cytoplasm. The protein resides in the perinuclear region. It localises to the endoplasmic reticulum. The protein localises to the golgi apparatus. May play a role in vesicular transport from endoplasmic reticulum to Golgi. The protein is Trafficking protein particle complex subunit 2-like protein (Trappc2l) of Mus musculus (Mouse).